Reading from the N-terminus, the 298-residue chain is Quinolinate synthase (298 aa).

Iminosuccinate-binding residues include histidine 19 and serine 36. Position 81 (cysteine 81) interacts with [4Fe-4S] cluster. Iminosuccinate contacts are provided by residues 107–109 and serine 124; that span reads YVN. Residue cysteine 168 coordinates [4Fe-4S] cluster. Iminosuccinate-binding positions include 193-195 and threonine 210; that span reads HPE. Cysteine 254 is a binding site for [4Fe-4S] cluster.

The protein belongs to the quinolinate synthase family. Type 2 subfamily. Requires [4Fe-4S] cluster as cofactor.

Its subcellular location is the cytoplasm. It carries out the reaction iminosuccinate + dihydroxyacetone phosphate = quinolinate + phosphate + 2 H2O + H(+). Its pathway is cofactor biosynthesis; NAD(+) biosynthesis; quinolinate from iminoaspartate: step 1/1. Its function is as follows. Catalyzes the condensation of iminoaspartate with dihydroxyacetone phosphate to form quinolinate. This Thermotoga sp. (strain RQ2) protein is Quinolinate synthase.